The chain runs to 235 residues: Small ribosomal subunit protein uS2c (235 aa).

This sequence belongs to the universal ribosomal protein uS2 family.

Its subcellular location is the plastid. It localises to the chloroplast. The chain is Small ribosomal subunit protein uS2c (rps2) from Guillardia theta (Cryptophyte).